We begin with the raw amino-acid sequence, 235 residues long: Large ribosomal subunit protein uL1 (235 aa).

It belongs to the universal ribosomal protein uL1 family. In terms of assembly, part of the 50S ribosomal subunit.

Functionally, binds directly to 23S rRNA. The L1 stalk is quite mobile in the ribosome, and is involved in E site tRNA release. Protein L1 is also a translational repressor protein, it controls the translation of the L11 operon by binding to its mRNA. This is Large ribosomal subunit protein uL1 from Prochlorococcus marinus (strain MIT 9312).